A 127-amino-acid polypeptide reads, in one-letter code: NADPH-dependent 7-cyano-7-deazaguanine reductase (127 aa).

Catalysis depends on C40, which acts as the Thioimide intermediate. The active-site Proton donor is the D47. Residues 62 to 64 and 81 to 82 contribute to the substrate site; these read VEL and HE.

The protein belongs to the GTP cyclohydrolase I family. QueF type 1 subfamily.

The protein localises to the cytoplasm. It catalyses the reaction 7-aminomethyl-7-carbaguanine + 2 NADP(+) = 7-cyano-7-deazaguanine + 2 NADPH + 3 H(+). It participates in tRNA modification; tRNA-queuosine biosynthesis. Its function is as follows. Catalyzes the NADPH-dependent reduction of 7-cyano-7-deazaguanine (preQ0) to 7-aminomethyl-7-deazaguanine (preQ1). This chain is NADPH-dependent 7-cyano-7-deazaguanine reductase, found in Campylobacter jejuni (strain RM1221).